A 459-amino-acid polypeptide reads, in one-letter code: uncharacterized protein (459 aa).

The TRAM domain maps to 5 to 63; that stretch reads PVEEGQKFPLTIRRMGINGEGIGYFKKAVVFVPGAITGEEVVVEAVKVRDRFTEAKLNK. The [4Fe-4S] cluster site is built by cysteine 76, cysteine 82, cysteine 85, and cysteine 166. Positions 290, 319, 340, and 388 each coordinate S-adenosyl-L-methionine. Catalysis depends on cysteine 415, which acts as the Nucleophile.

It belongs to the class I-like SAM-binding methyltransferase superfamily. RNA M5U methyltransferase family.

This is an uncharacterized protein from Listeria monocytogenes serotype 4b (strain F2365).